A 103-amino-acid chain; its full sequence is Large ribosomal subunit protein bL21 (103 aa).

The protein belongs to the bacterial ribosomal protein bL21 family. As to quaternary structure, part of the 50S ribosomal subunit. Contacts protein L20.

Its function is as follows. This protein binds to 23S rRNA in the presence of protein L20. The protein is Large ribosomal subunit protein bL21 of Psychrobacter sp. (strain PRwf-1).